The chain runs to 104 residues: Holotricin-3 (104 aa).

A signal peptide spans 1 to 20 (MNKLIILGLACIIAVASAMP). Residues 22 to 104 (GPGDGHGGGH…HHGGYQTHGY (83 aa)) are disordered. Residues 23–97 (PGDGHGGGHG…PGGHGGGHHG (75 aa)) are compositionally biased toward gly residues. 18 consecutive repeat copies span residues 27-30 (HGGG), 31-34 (HGGG), 35-38 (HGGG), 39-42 (HGNG), 43-46 (QGGG), 47-50 (HGHG), 51-54 (PGGG), 55-58 (FGGG), 59-62 (HGGG), 63-66 (HGGG), 67-70 (GRGG), 71-74 (GGSG), 75-78 (GGGS), 79-82 (PGHG), 83-86 (AGGG), 87-90 (YPGG), 91-94 (HGGG), and 96-98 (HGG). Positions 27 to 98 (HGGGHGGGHG…GGHGGGHHGG (72 aa)) are 18 X 4 AA approximate tandem repeats of H-G-G-G.

To T.molitor tenecin 3.

It is found in the secreted. Its function is as follows. Has antifungal activity against C.albicans. This is Holotricin-3 from Holotrichia diomphalia (Korean black chafer).